The following is an 80-amino-acid chain: Kunitz-type serine protease inhibitor LmKTT-1b (80 aa).

The signal sequence occupies residues 1–21; that stretch reads MKSFLLIALVLFFLFVSYASA. The BPTI/Kunitz inhibitor domain occupies 25 to 75; sequence CQLPSDVGKGKASFTRYYYNEEGGKCETFIYGGVGGNSNNFLTKEDCCREC. 3 disulfide bridges follow: Cys25/Cys75, Cys50/Cys71, and Cys72/Cys80.

This sequence belongs to the venom Kunitz-type family. Scorpion delta-Ktx subfamily. Delta-Ktx 2 sub-subfamily. As to expression, expressed by the venom gland.

It is found in the secreted. Its function is as follows. Serine protease inhibitor that inhibits trypsin at a molar ratio of 1:1 (Ki=160 nM). Is thermostable. This Lychas mucronatus (Chinese swimming scorpion) protein is Kunitz-type serine protease inhibitor LmKTT-1b.